The chain runs to 490 residues: GTPase Der (490 aa).

EngA-type G domains are found at residues 3–166 (PVVA…MDDV) and 203–376 (IKLA…DSST). GTP-binding positions include 9–16 (GRPNVGKS), 56–60 (DTGGI), 118–121 (NKTD), 209–216 (GRPNVGKS), 256–260 (DTAGV), and 321–324 (NKWD). The KH-like domain maps to 377 to 461 (RRVSTAMLTR…PIRIQFKEGE (85 aa)).

This sequence belongs to the TRAFAC class TrmE-Era-EngA-EngB-Septin-like GTPase superfamily. EngA (Der) GTPase family. Associates with the 50S ribosomal subunit.

Functionally, GTPase that plays an essential role in the late steps of ribosome biogenesis. The sequence is that of GTPase Der from Salmonella newport (strain SL254).